We begin with the raw amino-acid sequence, 544 residues long: Inward rectifier potassium channel irk-1 (544 aa).

At 1–109 (MTLSVPDCAE…IFTTMIDVKW (109 aa)) the chain is on the cytoplasmic side. The chain crosses the membrane as a helical span at residues 110 to 134 (RWMLMLFASAFVLSWSIFGTTYYLI). Residues 135-158 (ALVHGDLSLPTPVNHTACVMNLDS) lie on the Extracellular side of the membrane. The segment at residues 159–170 (VYSSFLFAVETH) is an intramembrane region (helical; Pore-forming). An intramembrane region (pore-forming) is located at residues 171–177 (HTIGYGH). Residues 172–177 (TIGYGH) carry the Selectivity filter motif. Residues 178–186 (RYITTECYL) are Extracellular-facing. A helical transmembrane segment spans residues 187-208 (AGAIVCLQAICALLLQSFMVGI). At 209-544 (VFAKMARPKK…PIHIEIVSET (336 aa)) the chain is on the cytoplasmic side. Disordered regions lie at residues 411-448 (HKLE…NSPV) and 512-533 (LSDL…SPPV). Polar residues predominate over residues 438 to 448 (NHFQSSSNSPV).

The protein belongs to the inward rectifier-type potassium channel (TC 1.A.2.1) family. In terms of tissue distribution, expressed in neurons in the head and tail with no expression detected in non-neuronal cells in these regions. Also detected in the egg-laying system of adult hermaphordites with strong expression in the HSN motor neurons and weak expression in vulval muscles.

It localises to the membrane. The protein resides in the perikaryon. The protein localises to the cell projection. Functionally, inward rectifier potassium channels are characterized by a greater tendency to allow potassium to flow into the cell rather than out of it. Required for modulation of the activity of the hermaphrodite-specific neurons (HSNs) by the G-protein coupled neuropeptide receptor egl-6 which in turn controls egg-laying behavior. This Caenorhabditis elegans protein is Inward rectifier potassium channel irk-1 (irk-1).